Reading from the N-terminus, the 233-residue chain is MAKLTKRMRVIRDKVDGMKSYDINEAVALLKELATAKFVESVDVAVNLGIDPRKSDQNVRGATVLPHGTGRDVRVAVFTQGANAEAAKAAGAELVGMEELAEQIKAGEMNFDVVIASPDAMRVVGMLGQILGPRGLMPNPKTGTVTPNVAEAVKNAKAGQVRYRNDKNGIIHTTIGKVDFTTEQLKENLEALVSALKKAKPAVAKGVFVKKISISTTMGAGVAVDQATLETAN.

This sequence belongs to the universal ribosomal protein uL1 family. Part of the 50S ribosomal subunit.

Binds directly to 23S rRNA. The L1 stalk is quite mobile in the ribosome, and is involved in E site tRNA release. Its function is as follows. Protein L1 is also a translational repressor protein, it controls the translation of the L11 operon by binding to its mRNA. The protein is Large ribosomal subunit protein uL1 of Shewanella denitrificans (strain OS217 / ATCC BAA-1090 / DSM 15013).